The following is a 204-amino-acid chain: Ubiquitin-conjugating enzyme E2 S (204 aa).

One can recognise a UBC core domain in the interval Gln14–Lys160. Catalysis depends on Cys98, which acts as the Glycyl thioester intermediate. A compositionally biased stretch (polar residues) spans Ser165–Ser176. The segment at Ser165 to Leu204 is disordered. A compositionally biased stretch (basic residues) spans Asp191–Leu204.

This sequence belongs to the ubiquitin-conjugating enzyme family.

It catalyses the reaction S-ubiquitinyl-[E1 ubiquitin-activating enzyme]-L-cysteine + [E2 ubiquitin-conjugating enzyme]-L-cysteine = [E1 ubiquitin-activating enzyme]-L-cysteine + S-ubiquitinyl-[E2 ubiquitin-conjugating enzyme]-L-cysteine.. Its pathway is protein modification; protein ubiquitination. Catalyzes the covalent attachment of ubiquitin to other proteins. Acts as an essential factor of the anaphase promoting complex/cyclosome (APC/C), a cell cycle-regulated ubiquitin ligase that controls progression through mitosis. Acts by specifically elongating polyubiquitin chains initiated by the E2 enzyme UBCH10 on APC/C substrates, enhancing the degradation of APC/C substrates by the proteasome and promoting mitotic exit. The sequence is that of Ubiquitin-conjugating enzyme E2 S from Nematostella vectensis (Starlet sea anemone).